Here is a 137-residue protein sequence, read N- to C-terminus: Structural protein A137R (137 aa).

It belongs to the asfivirus A137R family. Interacts with host TBK1.

Its subcellular location is the virion. It localises to the host cytoplasm. Its function is as follows. Plays a role in the inhibition of the host innate immune response. Mechanistically, promotes the autophagy-mediated lysosomal degradation of host TBK1 and affects IRF3 nuclear translocation to block type I IFN production. The sequence is that of Structural protein A137R from Ornithodoros (relapsing fever ticks).